The primary structure comprises 366 residues: Chorismate synthase (366 aa).

2 residues coordinate NADP(+): Arg48 and Arg54. FMN-binding positions include 125-127 (RSS), 238-239 (NA), Gly278, 293-297 (KPTSS), and Arg319.

Belongs to the chorismate synthase family. In terms of assembly, homotetramer. The cofactor is FMNH2.

The enzyme catalyses 5-O-(1-carboxyvinyl)-3-phosphoshikimate = chorismate + phosphate. It functions in the pathway metabolic intermediate biosynthesis; chorismate biosynthesis; chorismate from D-erythrose 4-phosphate and phosphoenolpyruvate: step 7/7. Functionally, catalyzes the anti-1,4-elimination of the C-3 phosphate and the C-6 proR hydrogen from 5-enolpyruvylshikimate-3-phosphate (EPSP) to yield chorismate, which is the branch point compound that serves as the starting substrate for the three terminal pathways of aromatic amino acid biosynthesis. This reaction introduces a second double bond into the aromatic ring system. The protein is Chorismate synthase of Neisseria gonorrhoeae (strain ATCC 700825 / FA 1090).